Here is a 672-residue protein sequence, read N- to C-terminus: MAQPSILFSLTLIFLISIKSCDAKYRTSFFKTPNCSIYPDAEKCELNKTWTQEQVCDYVNCNDNACEGGGYLLWTQYVECASSTFSRVILIIVGVIYMLVLFIMVSSAADDFFSPSISSIVAHLRISESVAGVTFMAFGNGAPDVFGSIASVLSSPTPKADLALGELFGGGLFVTTMVVSTIILTSPFDVEVFSTIRDLLFYLVALSFLAFCFVFYNRVTLWMPLTFLGLYLLYVITVIGAQAVHNRKRKALQKQNSTKSRKSIKSLRSRKSIHSVAPMPVIPEIEVHDQEAPFPEISVVTGAIDKLKEHMAEKAQTTRRYTKRASFMVNGDGNLNGLHPYATHNHLGISRRESELSDEDEEFVVIHGHVFQGHEARSRAASLVPEPMQIKSWRSKDILKDLAEHLDPRPEAEDWEEMNIFSKVMAYINVVPNLLFKLTIPLNEMSWSKPLTLLHAFTCPAFLLFSIQFFLETPFSGSPGLWVYGLAVSIVLAILIMVFTELSVQPKYYKEIYSYSGFIMSIAWIYLISSEVVNVVTMLGVVSRVSHEVLGLTILAWSNSIGDLIADVSVVKQGYPRMAMAAAIGGPLFNLLMGFGLPFTIAKLQGKYISMTINPTYRLLILFLAISLLATLIGIPVQKFRLQRPHAAVLISIYIAFIVFVILSETGVLVWN.

A signal peptide spans 1-23 (MAQPSILFSLTLIFLISIKSCDA). Transmembrane regions (helical) follow at residues 88 to 108 (VILIIVGVIYMLVLFIMVSSA), 130 to 150 (VAGVTFMAFGNGAPDVFGSIA), 164 to 184 (LGELFGGGLFVTTMVVSTIIL), 196 to 216 (IRDLLFYLVALSFLAFCFVFY), 221 to 241 (LWMPLTFLGLYLLYVITVIGA), 451 to 471 (LTLLHAFTCPAFLLFSIQFFL), 479 to 499 (PGLWVYGLAVSIVLAILIMVF), 522 to 542 (IAWIYLISSEVVNVVTMLGVV), 551 to 571 (GLTILAWSNSIGDLIADVSVV), 581 to 601 (AAAIGGPLFNLLMGFGLPFTI), 620 to 640 (LILFLAISLLATLIGIPVQKF), and 649 to 669 (VLISIYIAFIVFVILSETGVL).

It belongs to the Ca(2+):cation antiporter (CaCA) (TC 2.A.19) family.

The protein resides in the membrane. This chain is Putative sodium/calcium exchanger 7 (ncx-7), found in Caenorhabditis elegans.